A 971-amino-acid chain; its full sequence is Protein cwh43 (971 aa).

Residues 1-242 are PGAP2-like; sequence MTEKTSSLVF…PSSFATRKKE (242 aa). The next 19 membrane-spanning stretches (helical) occupy residues 15-35, 71-91, 101-121, 129-149, 161-181, 188-208, 286-306, 313-333, 336-356, 366-386, 397-417, 432-452, 467-487, 509-529, 532-552, 555-575, 588-608, 622-642, and 673-693; these read VALVHTICSFAAFFIPLALAL, VFQWLIALTATPRLLVLLLWF, VIITTALGVLRTALCGGWVYV, WHDIFMIGYLISNAPWFILVS, IRNIGSALFVLTIFPLIYWYI, IPGAYTVYAFFEWSLILWDIL, VYLSFVFWSVLTSLGLLVWYF, ISGYEACILFELSPFLLGIPL, KFASKVPVIFLFLNVIGIAAY, FVTAFSVCCECLAWTSLFSNI, ISTFLFGLLASSIAKYSFFSN, QIPALIVGIIACLIFAIFHVQ, ITALSAALSLGTVLFCLHTFL, YPHGAVSIVVSICAVLVAPYL, SGAFMLIGFVLACFGSYFMYI, GWCSYLGGLIFTSYVLIYSFA, VWGGAFLVYILYSLAHVWVVA, TSYILIFIGWNLAALVPAYSG, and LLTGFCLALMALKFAIQNMPP. Residues 243-971 form a PGAP2IP-like region; it reads KGEHLSYAEA…LVVHEPWYYD (729 aa). The active site involves His-826.

In the N-terminal section; belongs to the PGAP2 family. The protein in the C-terminal section; belongs to the PGAP2IP family.

Its subcellular location is the cell membrane. It localises to the endoplasmic reticulum membrane. Involved in the maintenance of cell wall integrity. Required for the replacement of the diacylglycerol moiety by ceramides during GPI-anchor maturation. This chain is Protein cwh43 (cwh43), found in Schizosaccharomyces pombe (strain 972 / ATCC 24843) (Fission yeast).